Here is a 184-residue protein sequence, read N- to C-terminus: Protein YrdA (184 aa).

Belongs to the gamma-class carbonic anhydrase family.

This Escherichia coli (strain K12) protein is Protein YrdA (yrdA).